The sequence spans 493 residues: Fizzy-related protein homolog (493 aa).

Disordered stretches follow at residues 31 to 51, 64 to 88, and 105 to 166; these read LTPA…FIPS, INEN…GKDG, and EKVQ…SPRK. Phosphothreonine is present on Thr32. The span at 32-42 shows a compositional bias: polar residues; that stretch reads TPANSPVSSPS. Phosphoserine is present on Ser36. Residue Lys69 is modified to N6-acetyllysine. Composition is skewed to basic and acidic residues over residues 76–86 and 106–126; these read KAKDATSDNGK and KVQD…EHKG. 4 positions are modified to phosphoserine: Ser133, Ser138, Ser146, and Ser151. Over residues 146–160 the composition is skewed to polar residues; the sequence is SPYSLSPVSNKSQKL. Lys159 is subject to N6-acetyllysine. WD repeat units follow at residues 182–222, 227–266, 269–306, 311–350, 353–395, 397–438, and 441–480; these read PELQ…VTRL, VEGD…KLSM, GHTA…LQSE, GHRQ…PVQQ, EHLA…PLQC, DTGS…QVAK, and GHSY…RSTK.

The protein belongs to the WD repeat CDC20/Fizzy family. The unphosphorylated form interacts with APC/C during mitosis. Interacts with NINL. Interacts (in complex with the anaphase promoting complex APC) with MAD2L2; inhibits FZR1-mediated APC/C activation. Interacts with SIRT2. Interacts with USP37. Interacts (via WD repeats) with MAK. Interacts with RBBP8/CtIP; this interaction leads to RBBP8 proteasomal degradation. Interacts with HECW2. Interacts with SASS6; the interaction is regulated by CENATAC and leads to SASS6 proteasomal degradation. Interacts (via N-terminus) with CCNF. Interacts with CDC6. Interacts with TK1 (via the KEN box). Acetylated. Deacetylated by SIRT2 at Lys-69 and Lys-159; deacetylation enhances the interaction of FZR1 with CDC27, leading to activation of anaphase promoting complex/cyclosome (APC/C). In terms of processing, following DNA damage, it is dephosphorylated by CDC14B in G2 phase, leading to its reassociation with the APC/C, and allowing an efficient G2 DNA damage checkpoint. Phosphorylated by MAK.

It functions in the pathway protein modification; protein ubiquitination. Substrate-specific adapter for the anaphase promoting complex/cyclosome (APC/C) E3 ubiquitin-protein ligase complex. Associates with the APC/C in late mitosis, in replacement of CDC20, and activates the APC/C during anaphase and telophase. The APC/C remains active in degrading substrates to ensure that positive regulators of the cell cycle do not accumulate prematurely. At the G1/S transition FZR1 is phosphorylated, leading to its dissociation from the APC/C. Following DNA damage, it is required for the G2 DNA damage checkpoint: its dephosphorylation and reassociation with the APC/C leads to the ubiquitination of PLK1, preventing entry into mitosis. Acts as an adapter for APC/C to target the DNA-end resection factor RBBP8/CtIP for ubiquitination and subsequent proteasomal degradation. Through the regulation of RBBP8/CtIP protein turnover, may play a role in DNA damage response, favoring DNA double-strand repair through error-prone non-homologous end joining (NHEJ) over error-free, RBBP8-mediated homologous recombination (HR). The polypeptide is Fizzy-related protein homolog (Fzr1) (Mus musculus (Mouse)).